Here is a 456-residue protein sequence, read N- to C-terminus: UDP-N-acetylmuramoylalanine--D-glutamate ligase (456 aa).

Position 113–119 (113–119 (GTNGKTT)) interacts with ATP.

Belongs to the MurCDEF family.

It localises to the cytoplasm. It catalyses the reaction UDP-N-acetyl-alpha-D-muramoyl-L-alanine + D-glutamate + ATP = UDP-N-acetyl-alpha-D-muramoyl-L-alanyl-D-glutamate + ADP + phosphate + H(+). Its pathway is cell wall biogenesis; peptidoglycan biosynthesis. Functionally, cell wall formation. Catalyzes the addition of glutamate to the nucleotide precursor UDP-N-acetylmuramoyl-L-alanine (UMA). The protein is UDP-N-acetylmuramoylalanine--D-glutamate ligase of Rippkaea orientalis (strain PCC 8801 / RF-1) (Cyanothece sp. (strain PCC 8801)).